The chain runs to 200 residues: Coiled-coil domain-containing protein 28B (200 aa).

Met1 is modified (N-acetylmethionine). A compositionally biased stretch (basic residues) spans 1–10 (MDDKKKKRSP). Residues 1 to 49 (MDDKKKKRSPKPCLAQPAQAPGTLRRVPVPTSHSGSLALGLPHLPSPKQ) form a disordered region. Residues Ser46 and Ser115 each carry the phosphoserine modification. Positions 141 to 152 (EEEDDEEEEDGV) are enriched in acidic residues. A disordered region spans residues 141–164 (EEEDDEEEEDGVTEGLPEEQKKTM). Residues 158–183 (EEQKKTMADRNLDQLLSNLEDLSNSI) adopt a coiled-coil conformation.

As to quaternary structure, interacts with BBS1, BBS2, BBS4, BBS5, BBS6, BBS7 and TTC8/BBS8. Interacts with MAPKAP1/SIN1 isoform 1 and RICTOR.

The protein resides in the cytoplasm. It localises to the cytoskeleton. Its subcellular location is the microtubule organizing center. It is found in the centrosome. Involved in ciliogenesis. Regulates cilia length through its interaction with MAPKAP1/SIN1 but independently of mTORC2 complex. Modulates mTORC2 complex assembly and function, possibly enhances AKT1 phosphorylation. Does not seem to modulate assembly and function of mTORC1 complex. This chain is Coiled-coil domain-containing protein 28B (CCDC28B), found in Homo sapiens (Human).